Reading from the N-terminus, the 460-residue chain is Tyrosine phenol-lyase (460 aa).

Lysine 260 is modified (N6-(pyridoxal phosphate)lysine).

Belongs to the beta-eliminating lyase family. As to quaternary structure, homotetramer. It depends on pyridoxal 5'-phosphate as a cofactor.

It catalyses the reaction L-tyrosine + H2O = phenol + pyruvate + NH4(+). The sequence is that of Tyrosine phenol-lyase from Clostridium tetani (strain Massachusetts / E88).